Consider the following 725-residue polypeptide: Phosphatase and actin regulator 4A (725 aa).

Residues 1–12 (MGQGASTQTLNP) are compositionally biased toward polar residues. The tract at residues 1–597 (MGQGASTQTL…SSTWNNKEQW (597 aa)) is disordered. Residues 55–64 (KPWKWRKKKT) are compositionally biased toward basic residues. 3 stretches are compositionally biased toward basic and acidic residues: residues 65–100 (SDKF…KDIP), 124–147 (GDRK…GERK), and 155–164 (KRNDGTERMT). The RPEL 1 repeat unit spans residues 75 to 100 (LVLERKMSVRKPREELIERGLLKDIP). The segment covering 166 to 177 (MIQSFQKMSLMQ) has biased composition (polar residues). Residues 212-221 (VIAAPSSAEP) show a composition bias toward low complexity. A compositionally biased stretch (pro residues) spans 222 to 235 (APVPPPPIAKPPPR). Low complexity-rich tracts occupy residues 265–276 (PAHTTPATVSTH) and 292–313 (PAHV…LLKQ). Polar residues predominate over residues 359–368 (TPVTKRNSGD). The span at 374 to 384 (PEPPPPAPTSV) shows a compositional bias: pro residues. A compositionally biased stretch (low complexity) spans 385–401 (PIPAAAPISAPPSTQSD). The segment covering 402-417 (PPSPTTEPPSQPPPLP) has biased composition (pro residues). Positions 497–510 (QKPELEPRSRRGLV) are enriched in basic and acidic residues. 2 stretches are compositionally biased toward acidic residues: residues 522–536 (AGSE…ESDS) and 545–554 (DNEEDDDEED). The segment covering 567-585 (KDTLALKLERQQEKEKSQE) has biased composition (basic and acidic residues). 2 RPEL repeats span residues 606-631 (TALT…LAKN) and 644-669 (RRLT…RFHE).

It belongs to the phosphatase and actin regulator family. Binds ppp1ca and actin.

It localises to the cytoplasm. It is found in the cell projection. Its subcellular location is the lamellipodium. Its function is as follows. Regulator of protein phosphatase 1 (PP1) required for neural tube and optic fissure closure, and enteric neural crest cell (ENCCs) migration during development. Acts as an activator of PP1. During neural tube closure, localizes to the ventral neural tube and activates PP1, leading to down-regulate cell proliferation within cranial neural tissue and the neural retina. Also acts as a regulator of migration of enteric neural crest cells (ENCCs) by activating PP1, leading to repression of the integrin signaling through the rho/rock pathway. This Danio rerio (Zebrafish) protein is Phosphatase and actin regulator 4A (phactr4a).